Here is a 113-residue protein sequence, read N- to C-terminus: N(2)-fixation sustaining protein CowN (113 aa).

Belongs to the CowN family.

Its function is as follows. Is required to sustain N(2)-dependent growth in the presence of low levels of carbon monoxide (CO). Probably acts by protecting the N(2) fixation ability of the nitrogenase complex, which is inactivated in the presence of CO. This Wolinella succinogenes (strain ATCC 29543 / DSM 1740 / CCUG 13145 / JCM 31913 / LMG 7466 / NCTC 11488 / FDC 602W) (Vibrio succinogenes) protein is N(2)-fixation sustaining protein CowN.